The sequence spans 4730 residues: Dynein heavy chain, cytoplasmic (4730 aa).

2 disordered regions span residues 1-23 (MEDQ…VVTP) and 91-120 (TINS…QQQS). The tract at residues 1–1935 (MEDQQINVDS…VIHMANATFY (1935 aa)) is stem. Positions 10-23 (SPTSGTNTPPVVTP) are enriched in low complexity. The stretch at 867–900 (VRKLSTSINNFRDKVDDLIVKYSEIKKQLDGLKS) forms a coiled coil. Residues 964–1016 (EDQKDSQSTSGSSNKGGKLNRMNYSIRNKSDEENSSDLTQPQQSQQQQQTISI) are disordered. The segment covering 969–978 (SQSTSGSSNK) has biased composition (polar residues). Low complexity predominate over residues 1002–1016 (TQPQQSQQQQQTISI). 4 coiled-coil regions span residues 1204 to 1224 (EKMN…EKLS), 1343 to 1372 (ALET…QALD), 1425 to 1441 (RKVR…LKNL), and 1661 to 1689 (AIER…YLER). AAA stretches follow at residues 1936 to 2158 (YGFE…VLVS), 2238 to 2531 (KKIQ…FTRL), 2635 to 2885 (EVET…WDRA), and 2978 to 3252 (VFYE…QGRQ). 1974 to 1981 (GPAGTGKT) contributes to the ATP binding site. Residues 2231-2253 (IQMDQLRKKIQEIAKQRHLVTKQ) adopt a coiled-coil conformation. Position 2276-2283 (2276-2283 (GPSGGGKT)) interacts with ATP. Residues 2437 to 2486 (EPFDPQEKEQQKRNENAQLQQQQQTTITSPILTSPPTTSSSSRSTTSTTS) form a disordered region. Positions 2441-2451 (PQEKEQQKRNE) are enriched in basic and acidic residues. Residues 2442–2462 (QEKEQQKRNENAQLQQQQQTT) are a coiled coil. A compositionally biased stretch (low complexity) spans 2454–2486 (QLQQQQQTTITSPILTSPPTTSSSSRSTTSTTS). Residues 2674–2681 (GPPGSGKT) and 3016–3023 (GVSGGGKS) contribute to the ATP site. Coiled-coil stretches lie at residues 3271–3349 (INEK…VQLD), 3483–3585 (AQTY…NTQM), and 3854–3881 (TLET…EISE). Residues 3271 to 3585 (INEKRDQLEE…QQSENFNTQM (315 aa)) form a stalk region. AAA stretches follow at residues 3638–3867 (LSKP…EIAL) and 4098–4312 (SHSF…SIDY). The disordered stretch occupies residues 4432 to 4465 (KMQSSEEDGEDDQVSGSSKKESSSSSSEDKGKAK). Basic and acidic residues predominate over residues 4449 to 4463 (SKKESSSSSSEDKGK).

Belongs to the dynein heavy chain family. Consists of at least two heavy chains and a number of intermediate and light chains.

It is found in the cytoplasm. It localises to the cytoskeleton. In terms of biological role, cytoplasmic dynein acts as a motor for the intracellular retrograde motility of vesicles and organelles along microtubules. Dynein has ATPase activity; the force-producing power stroke is thought to occur on release of ADP. In Dictyostelium discoideum (Social amoeba), this protein is Dynein heavy chain, cytoplasmic (dhcA).